The primary structure comprises 257 residues: UPF0246 protein YaaA (257 aa).

The protein belongs to the UPF0246 family.

The chain is UPF0246 protein YaaA from Salmonella choleraesuis (strain SC-B67).